A 149-amino-acid polypeptide reads, in one-letter code: Alpha-crystallin A chain (149 aa).

The sHSP domain occupies 41 to 149 (LFRSVLESGI…DPTHSERPIP (109 aa)). 4 residues coordinate Zn(2+): histidine 89, glutamate 91, histidine 96, and histidine 143.

Belongs to the small heat shock protein (HSP20) family. In terms of assembly, heteropolymer composed of three CRYAA and one CRYAB subunits. Inter-subunit bridging via zinc ions enhances stability, which is crucial as there is no protein turn over in the lens. Can also form homodimers and homotetramers (dimers of dimers) which serve as the building blocks of homooligomers. Within homooligomers, the zinc-binding motif is created from residues of 3 different molecules. His-89 and Glu-91 from one molecule are ligands of the zinc ion, and His-96 and His-143 residues from additional molecules complete the site with tetrahedral coordination geometry.

It localises to the cytoplasm. It is found in the nucleus. Contributes to the transparency and refractive index of the lens. May act as a chaperone, preventing aggregation of various proteins under a wide range of stress conditions. This is Alpha-crystallin A chain (CRYAA) from Anas platyrhynchos (Mallard).